A 273-amino-acid chain; its full sequence is Short-chain dehydrogenase fogB (273 aa).

NADP(+) is bound by residues Ile-16, Asp-66, Arg-128, Tyr-174, Lys-178, Val-207, and Thr-209. Residue Tyr-174 is the Proton donor of the active site. Catalysis depends on Lys-178, which acts as the Lowers pKa of active site Tyr.

It belongs to the short-chain dehydrogenases/reductases (SDR) family.

Its function is as follows. Short-chain dehydrogenase; part of the gene cluster that mediates the biosynthesis of flavoglaucin and congeners (including aspergin, dihydroauroglaucin and auroglaucin), prenylated salicylaldehyde derivatives carrying a saturated or an unsaturated C-7 side chain. The PKS fogA releases the carboxylic acid (8E,10E,12E)-3,5,7-trihydroxytetradeca-8,10,12-trienoic acid as its product, as well as derivatives with one and two double bonds. FogA is indeed able to reduce the initial triketide, thus being at least partially responsible for the differently saturated heptyl side chains of flavoglaucin congeners. The oxidoreductases fogB, fogC and fogD modify the nascent polyketide in fogA-bound form and, together, fogA, fogB, fogC and fogD are necessary for the formation of the aromatic core and the cyclized PKS products are released as salicyl alcohols. In particular, fogB is responsible for oxidation of a hydroxyl group or reduction of remaining double bond(s) at the C-7 residue whereas fogD is probably involved in the reductive release of the modified PKS products. The cytochrome P450 monooxygenase fogE is then responsible for the hydroxylation at C-3 of the benzene ring. The fogE products are substrates of the prenyltransferase fogH and the prenylated benzyl alcohols are subsequently oxidized by the fogF to produce the final aryl aldehydes flavoglaucin and congeners. The short-chain dehydrogenase fogG does not seem to be involved in the biosynthesis of the prenylated salicylaldehyde derivatives. This is Short-chain dehydrogenase fogB from Aspergillus ruber (strain CBS 135680).